The chain runs to 552 residues: FACT complex subunit POB3 (552 aa).

Over residues 190–205 the composition is skewed to basic and acidic residues; that stretch reads KKEESSNEVVPKKEDG. Disordered regions lie at residues 190 to 209 and 484 to 552; these read KKEESSNEVVPKKEDGAEGE and QTAL…PKVE. A compositionally biased stretch (acidic residues) spans 490–529; that stretch reads DSDEEDINMGSAGEDDESVDEDFQVSSDNDADEVAEEFDS. Residues 541–552 show a composition bias toward basic and acidic residues; sequence DEERPSKKPKVE.

This sequence belongs to the SSRP1 family. As to quaternary structure, forms a stable heterodimer with SPT16. The SPT16-POB3 dimer weakly associates with multiple molecules of NHP6 (NHP6A or NHP6B) to form the FACT (yFACT or SNP) complex. The FACT complex interacts with the CK2 (casein kinase II) complex subunits CKA1, CKA2, CKB1 and CKB2 and the components of the transcription machinery CHD1, CTR9, PAF1 and CDC73. The FACT complex interacts with the PAF1 complex. SPT16 interacts with SAS3 and POL1. Interacts directly with RFA1.

It localises to the nucleus. The protein resides in the chromosome. In terms of biological role, component of the FACT complex, a general chromatin factor that acts to reorganize nucleosomes. The FACT complex is involved in multiple processes that require DNA as a template such as mRNA elongation, DNA replication and DNA repair. During transcription elongation the FACT complex acts as a histone chaperone that both destabilizes and restores nucleosomal structure. It facilitates the passage of RNA polymerase II and transcription by promoting the dissociation of one histone H2A-H2B dimer from the nucleosome, then subsequently promotes the reestablishment of the nucleosome following the passage of RNA polymerase II. Transcription elongation is promoted by the repression of transcription initiation from cryptic sites. Also acts in establishing transcription initiation complexes and promotes SPT15/TBP-binding to a TATA box. Together with replication factor-A protein (RPA), FACT may play a role in nucleosome deposition during DNA replication. The chain is FACT complex subunit POB3 (POB3) from Saccharomyces cerevisiae (strain ATCC 204508 / S288c) (Baker's yeast).